The following is a 645-amino-acid chain: Leucine-rich repeat protein soc-2 homolog (645 aa).

Residues 1–19 are compositionally biased toward low complexity; it reads MNLCSSGATASTTSLSSTG. 2 disordered regions span residues 1-67 and 83-151; these read MNLC…AGGS and NSPA…IQAD. Gly residues-rich tracts occupy residues 26-49 and 88-97; these read GVPGGGAEGGGGDGGSGNSGGGGS and GAGGASGSTG. Residues 98 to 107 show a composition bias toward low complexity; it reads SGQQPTGSNG. LRR repeat units lie at residues 165-186, 188-209, 211-232, 234-255, 257-278, 280-301, 303-324, 326-347, 349-371, 372-393, 396-417, 420-441, 444-465, 467-488, 490-511, 513-534, 536-557, 559-580, 582-604, and 606-627; these read GIKRLDLSKSSITVIPSTVKEC, HLTELYLYSNKIGQLPPEIGCL, SLRNLALNENSLTSLPESLQNC, QLKVLDLRHNKLAEIPPVIYRL, SLTTLYLRFNRITAVADDLRQL, NLTMLSLRENKIRELGSAIGAL, NLTTLDVSHNHLEHLPEDIGNC, NLSALDLQHNELLDIPDSIGNL, SLVRLGMRYNRLSSVPATLKNCK, SMDEFNVEGNGITQLPDGMLAS, GLTTITLSRNQFASYPTGGPAQ, NVYSINLEHNRIDKIPYGIFSR, GLTKLNMKENMLTALPLDIGTW, NMVELNLATNALQKLPDDIMNL, NLEILILSNNMLKKIPNTIGNL, RLRILDLEENRIEVLPHEIGLL, ELQRLILQTNQITMLPRSIGHL, NLTHLSVSENNLQFLPEEIGSL, SLENLYINQNPGLEKLPFELALC, and NLKYLNIDKCPLSTIPPEIQAG.

Belongs to the SHOC2 family.

In terms of biological role, acts as a Ras effector and participates in MAPK pathway activation. Probably acts as a regulatory subunit of protein phosphatase that specifically dephosphorylates Raf kinase and stimulate Raf activity at specialized signaling complexes upon Ras activation. The sequence is that of Leucine-rich repeat protein soc-2 homolog (Sur-8) from Drosophila yakuba (Fruit fly).